Here is a 408-residue protein sequence, read N- to C-terminus: Ribulose bisphosphate carboxylase/oxygenase activase, chloroplastic (408 aa).

Residues 1-32 (MQVTMKSSAVSGQRVGGARVATRSVRRAQLQV) constitute a chloroplast transit peptide. Residue 138-145 (GGKGQGKT) coordinates ATP.

Belongs to the RuBisCO activase family. Monomer.

The protein localises to the plastid. It is found in the chloroplast stroma. Functionally, activation of RuBisCO (ribulose-1,5-bisphosphate carboxylase/oxygenase; EC 4.1.1.39) involves the ATP-dependent carboxylation of the epsilon-amino group of lysine leading to a carbamate structure. The protein is Ribulose bisphosphate carboxylase/oxygenase activase, chloroplastic of Chlamydomonas reinhardtii (Chlamydomonas smithii).